The primary structure comprises 497 residues: Bifunctional protein GlmU (497 aa).

Positions 1–252 (MSQPSARPSA…VWEVEGANDR (252 aa)) are pyrophosphorylase. Residues 14-17 (LAAG), Lys28, Gln86, 91-92 (GT), 115-117 (YGD), Gly154, Glu169, Asn192, and Asn250 each bind UDP-N-acetyl-alpha-D-glucosamine. Asp117 is a Mg(2+) binding site. Position 250 (Asn250) interacts with Mg(2+). The linker stretch occupies residues 253–273 (RQLSDLGRRLNERVLRHWMKE). Positions 274–497 (GVTVVDPSST…AGAEGSGAQG (224 aa)) are N-acetyltransferase. UDP-N-acetyl-alpha-D-glucosamine is bound by residues Arg355 and Lys373. His385 (proton acceptor) is an active-site residue. UDP-N-acetyl-alpha-D-glucosamine-binding residues include Tyr388 and Asn399. Residues 408-409 (NY), Ser427, and Ala445 contribute to the acetyl-CoA site. A disordered region spans residues 473 to 497 (PAKRPGTSSAEAARAAGAEGSGAQG). Over residues 480-490 (SSAEAARAAGA) the composition is skewed to low complexity.

The protein in the N-terminal section; belongs to the N-acetylglucosamine-1-phosphate uridyltransferase family. In the C-terminal section; belongs to the transferase hexapeptide repeat family. As to quaternary structure, homotrimer. The cofactor is Mg(2+).

It is found in the cytoplasm. It catalyses the reaction alpha-D-glucosamine 1-phosphate + acetyl-CoA = N-acetyl-alpha-D-glucosamine 1-phosphate + CoA + H(+). The enzyme catalyses N-acetyl-alpha-D-glucosamine 1-phosphate + UTP + H(+) = UDP-N-acetyl-alpha-D-glucosamine + diphosphate. It participates in nucleotide-sugar biosynthesis; UDP-N-acetyl-alpha-D-glucosamine biosynthesis; N-acetyl-alpha-D-glucosamine 1-phosphate from alpha-D-glucosamine 6-phosphate (route II): step 2/2. The protein operates within nucleotide-sugar biosynthesis; UDP-N-acetyl-alpha-D-glucosamine biosynthesis; UDP-N-acetyl-alpha-D-glucosamine from N-acetyl-alpha-D-glucosamine 1-phosphate: step 1/1. It functions in the pathway bacterial outer membrane biogenesis; LPS lipid A biosynthesis. Catalyzes the last two sequential reactions in the de novo biosynthetic pathway for UDP-N-acetylglucosamine (UDP-GlcNAc). The C-terminal domain catalyzes the transfer of acetyl group from acetyl coenzyme A to glucosamine-1-phosphate (GlcN-1-P) to produce N-acetylglucosamine-1-phosphate (GlcNAc-1-P), which is converted into UDP-GlcNAc by the transfer of uridine 5-monophosphate (from uridine 5-triphosphate), a reaction catalyzed by the N-terminal domain. In Micrococcus luteus (strain ATCC 4698 / DSM 20030 / JCM 1464 / CCM 169 / CCUG 5858 / IAM 1056 / NBRC 3333 / NCIMB 9278 / NCTC 2665 / VKM Ac-2230) (Micrococcus lysodeikticus), this protein is Bifunctional protein GlmU.